A 531-amino-acid polypeptide reads, in one-letter code: DnaJ homolog subfamily C member 21 (531 aa).

The J domain occupies 3–69 (CHYEALGVRR…QERAWYDNHR (67 aa)). Disordered regions lie at residues 279–311 (FGDG…AELY), 327–474 (KAMK…VPAE), and 502–531 (KATG…RKNR). Residues 281–311 (DGSDENEMEEHELKDEEDGKDSDEAEDAELY) show a composition bias toward acidic residues. Phosphoserine is present on residues Ser-283 and Ser-302. A C2H2-type 1 zinc finger spans residues 314-338 (LYCPACDKSFKTEKAMKNHEKSKKH). Positions 364–375 (NPLDDNSEEEME) are enriched in acidic residues. A Phosphoserine modification is found at Ser-370. Residues 381-392 (KLSKKQKKKKQK) are compositionally biased toward basic residues. Positions 393-403 (PAQNYDDNFNV) are enriched in polar residues. A compositionally biased stretch (basic and acidic residues) spans 442–453 (KPCDDPKSEAKS). Residues 455-464 (PKPKGKKTKD) are compositionally biased toward basic residues. Residues 482-506 (ISCTTCHSEFPSRNKLFDHLKATGH) form a C2H2-type 2 zinc finger. A Phosphoserine modification is found at Ser-511. Residues 511 to 522 (SSSSLNSATSSQ) are compositionally biased toward low complexity.

Interacts with HSPA8, PA2G4 and ZNF622. In terms of tissue distribution, expressed in brain, placenta, kidney and pancreas.

The protein localises to the cytoplasm. It localises to the nucleus. Its subcellular location is the nucleolus. May act as a co-chaperone for HSP70. May play a role in ribosomal RNA (rRNA) biogenesis, possibly in the maturation of the 60S subunit. Binds the precursor 45S rRNA. The protein is DnaJ homolog subfamily C member 21 (DNAJC21) of Homo sapiens (Human).